We begin with the raw amino-acid sequence, 587 residues long: Capsid vertex component 2 (587 aa).

An interaction with major capsid protein/MCP region spans residues 1-53 (MAEYVNYVLGSLYVSDTATSTIPTDVRNFIAPPFPLNFWSGPTFTVSSNTRAD). Positions 113-132 (SADAATPQVNASEADQRPDN) are disordered.

Belongs to the herpesviridae CVC2 protein family. In terms of assembly, heterodimerizes with CVC1. Interacts with major capsid protein/MCP and triplex capsid protein 1/TRX1 at the pentamer vertices. Interacts with the large tegument protein/LTP.

Its subcellular location is the virion. It is found in the host nucleus. Its function is as follows. Capsid vertex-specific component that plays a role during viral DNA encapsidation, assuring correct genome cleavage and presumably stabilizing capsids that contain full-length viral genomes. Participates in the interaction between the capsid and the tegument through interaction with the large tegument protein/LTP. This chain is Capsid vertex component 2, found in Equine herpesvirus 1 (strain Ab4p) (EHV-1).